Reading from the N-terminus, the 244-residue chain is Mitophagy receptor atg43 (244 aa).

Residues 1-24 are disordered; the sequence is MSSESKGIPIPRSDSNKTSDVSSW. Over 1–198 the chain is Cytoplasmic; sequence MSSESKGIPI…LVALITLRDH (198 aa). An atg8 interacting motif (AIM) motif is present at residues 28–31; the sequence is YELI. A disordered region spans residues 105–131; that stretch reads SLSLLQSKEEDDSSNWETEDSESAVEE. Acidic residues predominate over residues 113–131; that stretch reads EEDDSSNWETEDSESAVEE. An involved in MIM complex binding. Required for normal vegetative cell population growth but is dispensable for mitophagy region spans residues 165–184; it reads PPIPDLRFQQSYLQSIQRAN. Residues 199-215 traverse the membrane as a helical segment; that stretch reads VLYPFLSGGMWVFVRHI. At 216–244 the chain is on the mitochondrial intermembrane side; sequence FQFLKLQEKGFHFGQSLRRNLGLFSTFKD.

As to quaternary structure, interacts (via N-terminal atg8 interacting motif) with atg8; the interaction is direct. Interacts with the mitochondrial outer import machinery (MIM) complex subunits mim1 and mim2.

It localises to the mitochondrion outer membrane. Functionally, mitophagy receptor that tethers atg8 to the mitochondrial outer membrane to promote selective autophagy. This Schizosaccharomyces pombe (strain 972 / ATCC 24843) (Fission yeast) protein is Mitophagy receptor atg43.